A 2463-amino-acid chain; its full sequence is Protein TIC 214 (2463 aa).

6 consecutive transmembrane segments (helical) span residues 18-38 (VGLYYGFISAFSIGSSYLFLL), 60-80 (FFTGQLLIFISILYGPLHLAL), 86-106 (ILLLLAPYFFFHYLFSNSGQW), 127-147 (LVFLNNLLFQLFSLSLLGRPM), 170-190 (FVGWLIGHILVLKWAGLVFVW), and 297-317 (LFSIILFAIFLLYLDQTPLLY). Residues 326-441 (QLQRKLSNET…AARAMQEAYK (116 aa)) are a coiled coil. Disordered regions lie at residues 792-841 (AVPK…RKVN), 1230-1249 (SIQKDPKKEKDPKKEKGPKK), 1393-1417 (SGGRETPEFTRSQKDIDNLKNEQDF), 2116-2136 (EEEKIEKEKRKKERKKEKLKK), and 2162-2187 (KQRAKNIARMEEEDKKARKKRKRKVQ). Residues 794–830 (PKKKKKISKSKQKNVKSKQKNVKSKQKNVKSKQKNVK) show a composition bias toward basic residues. Composition is skewed to basic and acidic residues over residues 832 to 841 (KQNEIKRKVN), 1231 to 1249 (IQKDPKKEKDPKKEKGPKK), and 1397 to 1417 (ETPEFTRSQKDIDNLKNEQDF). Residues 2049–2192 (WDALVASLKQ…KRKVQVQENK (144 aa)) are a coiled coil. Over residues 2124–2136 (KRKKERKKEKLKK) the composition is skewed to basic residues.

Belongs to the TIC214 family. Part of the Tic complex.

It localises to the plastid. It is found in the chloroplast inner membrane. In terms of biological role, involved in protein precursor import into chloroplasts. May be part of an intermediate translocation complex acting as a protein-conducting channel at the inner envelope. This Oenothera elata subsp. hookeri (Hooker's evening primrose) protein is Protein TIC 214.